Consider the following 403-residue polypeptide: Succinoglycan biosynthesis protein ExoL (403 aa).

Its subcellular location is the cytoplasm. Its pathway is glycan metabolism; exopolysaccharide biosynthesis. Its function is as follows. Essential for succinoglycan (EPS I) synthesis and nodule infection. Glycosyltransferase needed for the addition of the third sugar (glucose), catalyzes the formation of a beta-1,4 linkage between the second and third sugars. In Rhizobium meliloti (strain 1021) (Ensifer meliloti), this protein is Succinoglycan biosynthesis protein ExoL (exoL).